We begin with the raw amino-acid sequence, 328 residues long: UPF0421 protein SAV1889 (328 aa).

4 helical membrane passes run 19–39 (IAIFLTAVFCMALDLTPIYAI), 61–81 (LPATVIGAGFAVLFTYLFGDQ), 108–128 (VAVLTSLAMIPGIHDAYIFNF), and 132–152 (TLTAIIGLVTSGLINFMVFPP).

Belongs to the UPF0421 family.

It localises to the cell membrane. The sequence is that of UPF0421 protein SAV1889 from Staphylococcus aureus (strain Mu50 / ATCC 700699).